The primary structure comprises 1648 residues: eIF-2-alpha kinase GCN2 (1648 aa).

The interval 1-26 is disordered; that stretch reads MAGGRGASGRGRAEPQESYSQRQDHE. The region spanning 25–137 is the RWD domain; that stretch reads HELQALEAIY…HHVQSFLSEH (113 aa). Positions 146–205 form a coiled coil; sequence HEEMLERQAQEKQQRLLEARRKEEQEQREILHEIQRRKEEIKEEKKRKEMAKQERLEITS. S230 is subject to Phosphoserine. 2 consecutive Protein kinase domains span residues 286–538 and 589–1000; these read VGSD…HSFI and FEEL…SELL. ATP-binding positions include 595–603 and K618; that span reads LGKGAFGAV. The disordered stretch occupies residues 661 to 784; that stretch reads PAVPGTPPPD…CNQKDGSHEI (124 aa). Residue T666 is modified to Phosphothreonine. 2 stretches are compositionally biased toward polar residues: residues 673-686 and 704-722; these read PQAQ…GKTS and LSSS…STRF. Composition is skewed to acidic residues over residues 730 to 739 and 753 to 763; these read SSDEEDEDER and SDSDIIFDNED. Basic and acidic residues predominate over residues 775 to 784; it reads CNQKDGSHEI. Catalysis depends on D846, which acts as the Proton acceptor. T869 is subject to Phosphothreonine. 2 positions are modified to phosphothreonine; by autocatalysis: T898 and T903. Residues 1021 to 1492 form a histidyl-tRNA synthetase-like region; the sequence is IDGKAYRTMM…DHVMQKLRTK (472 aa). K1258 carries the post-translational modification N6-acetyllysine.

The protein belongs to the protein kinase superfamily. Ser/Thr protein kinase family. GCN2 subfamily. As to quaternary structure, homodimer; homodimerization is important for kinase activation by uncharged tRNAs. Interacts with GCN1; this interaction stimulates EIF2AK4/GCN2 kinase activity and is impaired by IMPACT upon a variety of stress conditions, such as amino acid depletion, UV-C irradiation, proteasome inhibitor treatment and glucose deprivation. Interacts with DNAJC3; this interaction inhibits EIF2AK4/GCN2 kinase activity during endoplasmic reticulum (ER), hypothermic and amino acid-starving stress conditions. Interacts with MAP3K20; activates EIF2AK4/GCN2 kinase activity in response to moderate ribotoxic stress. Post-translationally, autophosphorylated; autophosphorylation on Thr-898 is increased upon amino acid starvation and in UV irradiation cells and inhibited in presence of IMPACT. In terms of tissue distribution, expressed in liver. Expressed predominantly in the hippocampal CA1 region and the dentate gyrus, and to a lesser degree in CA3 (at protein level). Expressed in liver, lung, brain, kidney, skeletal muscle and testis. Expressed weakly in heart and spleen. Expressed in the hippocampal CA1 and CA3 regions, the dentate gyrus and cerebellum. Isoform 1 is widely expressed. Isoform 1 is expressed in brain, liver, skeletal muscle and testis. Isoform 3 is expressed in lung, brain, testis, prostate and choroid plexus. Isoform 4 is expressed in muscle, lung, kidney, brain, testis and prostate.

The protein resides in the cytoplasm. It catalyses the reaction L-seryl-[protein] + ATP = O-phospho-L-seryl-[protein] + ADP + H(+). It carries out the reaction L-threonyl-[protein] + ATP = O-phospho-L-threonyl-[protein] + ADP + H(+). (Microbial infection) Kinase activity is enhanced by alphavirus genomic RNA sequences. Kinase activity is stimulated upon binding to uncharged tRNAs. Activated by serum starvation (in vitro). Functionally, metabolic-stress sensing protein kinase that phosphorylates the alpha subunit of eukaryotic translation initiation factor 2 (EIF2S1/eIF-2-alpha) in response to low amino acid availability. Plays a role as an activator of the integrated stress response (ISR) required for adaptation to amino acid starvation. EIF2S1/eIF-2-alpha phosphorylation in response to stress converts EIF2S1/eIF-2-alpha into a global protein synthesis inhibitor, leading to a global attenuation of cap-dependent translation, and thus to a reduced overall utilization of amino acids, while concomitantly initiating the preferential translation of ISR-specific mRNAs, such as the transcriptional activator ATF4, and hence allowing ATF4-mediated reprogramming of amino acid biosynthetic gene expression to alleviate nutrient depletion. Required for the translational induction of protein kinase PRKCH following amino acid starvation. Binds uncharged tRNAs. Involved in cell cycle arrest by promoting cyclin D1 mRNA translation repression after the unfolded protein response pathway (UPR) activation or cell cycle inhibitor CDKN1A/p21 mRNA translation activation in response to amino acid deprivation. Plays a role in the consolidation of synaptic plasticity, learning as well as formation of long-term memory. Plays a role in neurite outgrowth inhibition. Plays a role in feeding behavior to maintain amino acid homeostasis; contributes to the innate aversion toward diets of imbalanced amino acid composition. Plays a proapoptotic role in response to glucose deprivation. Promotes global cellular protein synthesis repression in response to UV irradiation independently of the stress-activated protein kinase/c-Jun N-terminal kinase (SAPK/JNK) and p38 MAPK signaling pathways. (Microbial infection) Plays a role in the antiviral response against alphavirus infection; impairs early viral mRNA translation of the incoming genomic virus RNA, thus preventing alphavirus replication. Its function is as follows. (Microbial infection) Plays a role in modulating the adaptive immune response to Yellow fever virus infection; promotes dendritic cells to initiate autophagy and antigene presentation to both CD4(+) and CD8(+) T-cells under amino acid starvation. This Mus musculus (Mouse) protein is eIF-2-alpha kinase GCN2.